The chain runs to 321 residues: Major immediate early protein (321 aa).

The segment at 86 to 139 (CSVCLETYSQQSNDTCPFLIPTTCDHGFCFKCVINLQSNAMNIPHSTVCCPLCN) adopts an RING-type zinc-finger fold. The interval 228–249 (LIEENTRLNEQIQELQHQVRTL) is leucine-zipper.

It localises to the host nucleus. Functionally, plays some regulatory role in both viral DNA replication and transcriptional transactivation. The sequence is that of Major immediate early protein (PE38) from Lepidoptera (butterflies and moths).